The sequence spans 223 residues: uncharacterized protein (223 aa).

The protein localises to the plastid. It is found in the chloroplast. This is an uncharacterized protein from Mesostigma viride (Green alga).